A 253-amino-acid polypeptide reads, in one-letter code: Putative glutamine amidotransferase PB2B2.05 (253 aa).

In terms of domain architecture, Glutamine amidotransferase type-1 spans 5 to 228 (IIALSVGFSN…INRSKWHMKQ (224 aa)). Cys100 acts as the Nucleophile in catalysis. Active-site residues include His200 and Glu202.

The protein resides in the cytoplasm. It is found in the nucleus. The sequence is that of Putative glutamine amidotransferase PB2B2.05 from Schizosaccharomyces pombe (strain 972 / ATCC 24843) (Fission yeast).